The chain runs to 1129 residues: Large proline-rich protein bag6 (1129 aa).

The Ubiquitin-like domain maps to 1–76; that stretch reads MEVTVKTLDS…HLVERAPPQT (76 aa). Disordered stretches follow at residues 69 to 108, 187 to 235, 347 to 402, 490 to 518, 550 to 606, 654 to 692, 942 to 967, and 987 to 1009; these read VERAPPQTQPSTGGPSTSSSTSPSSSNAANVPGAGAPERN, QPVN…SPSE, TGNG…HPHP, PAAPSFPPQPGVATTPPGPGGATTAVPGA, GSNT…QHLS, VPVSTSPPQSASQAPPPSSPSPPPAHSSPPPAAAPESLP, VPQAPEASSQDQPMETTPVDCQNGAA, and VPTICTDSEHPTQEDTGSEQWAA. The span at 73 to 105 shows a compositional bias: low complexity; it reads PPQTQPSTGGPSTSSSTSPSSSNAANVPGAGAP. 2 stretches are compositionally biased toward polar residues: residues 209 to 232 and 364 to 383; these read RETLPQTTQNTDGQSNTAPTSHPS and HTPTNTSEPQRSNSDNQPPS. Low complexity-rich tracts occupy residues 553–593 and 655–666; these read TPSS…SSGP and PVSTSPPQSASQ. Pro residues predominate over residues 667–686; sequence APPPSSPSPPPAHSSPPPAA. Residues 947–956 are compositionally biased toward polar residues; it reads EASSQDQPME.

Component of the bag6/bat3 complex.

It is found in the cytoplasm. It localises to the cytosol. The protein localises to the nucleus. The protein resides in the secreted. Its subcellular location is the extracellular exosome. Its function is as follows. ATP-independent molecular chaperone preventing the aggregation of misfolded and hydrophobic patches-containing proteins. Functions as part of a cytosolic protein quality control complex, the bag6/bat3 complex, which maintains these client proteins in a soluble state and participates in their proper delivery to the endoplasmic reticulum or alternatively can promote their sorting to the proteasome where they undergo degradation. The bag6/bat3 complex is involved in the post-translational delivery of tail-anchored/type II transmembrane proteins to the endoplasmic reticulum membrane. Similarly, the bag6/bat3 complex also functions as a sorting platform for proteins of the secretory pathway that are mislocalized to the cytosol either delivering them to the proteasome for degradation or to the endoplasmic reticulum. The bag6/bat3 complex also plays a role in the endoplasmic reticulum-associated degradation (ERAD), a quality control mechanism that eliminates unwanted proteins of the endoplasmic reticulum through their retrotranslocation to the cytosol and their targeting to the proteasome. It maintains these retrotranslocated proteins in an unfolded yet soluble state condition in the cytosol to ensure their proper delivery to the proteasome. Also required for selective ubiquitin-mediated degradation of defective nascent chain polypeptides by the proteasome. Also involved in endoplasmic reticulum stress-induced pre-emptive quality control, a mechanism that selectively attenuates the translocation of newly synthesized proteins into the endoplasmic reticulum and reroutes them to the cytosol for proteasomal degradation. May ensure the proper degradation of these proteins and thereby protects the endoplasmic reticulum from protein overload upon stress. By stabilizing a large spectrum of proteins, may indirectly affect different biological processes including apoptosis. By controlling the steady-state expression of the IGF1R receptor, indirectly regulates the insulin-like growth factor receptor signaling pathway. When nuclear, may also act as a component of some chromatin regulator complex. This chain is Large proline-rich protein bag6, found in Xenopus tropicalis (Western clawed frog).